The sequence spans 199 residues: VAMP-like protein YKT61 (199 aa).

In terms of domain architecture, Longin spans 7 to 133; it reads LVLKCAPEAS…LTEALNKFQD (127 aa). The region spanning 139–199 is the v-SNARE coiled-coil homology domain; it reads KLLKIQRELD…KKTNSCCTIL (61 aa). The S-palmitoyl cysteine moiety is linked to residue cysteine 195. Cysteine 196 bears the Cysteine methyl ester mark. Cysteine 196 is lipidated: S-geranylgeranyl cysteine. Positions 197 to 199 are cleaved as a propeptide — removed in mature form; the sequence is TIL.

Belongs to the synaptobrevin family. As to quaternary structure, interacts with SYP41. Core constituent of the SNARE complex required for membrane fusion at the trans-Golgi network. In terms of tissue distribution, expressed ubiquitously in roots, stems, flowers and leaves.

Its subcellular location is the cell membrane. In terms of biological role, may be involved in the secretory pathway. Essential for membrane fusion mediated by either SYP41 or SYP61; triggers the fusion of phospholipid vesicles containing SYP41 or SYP61 and VTI12. The sequence is that of VAMP-like protein YKT61 from Arabidopsis thaliana (Mouse-ear cress).